We begin with the raw amino-acid sequence, 226 residues long: Octanoyltransferase (226 aa).

The region spanning 34-216 is the BPL/LPL catalytic domain; that stretch reads GEANELVWLL…AWTEAFGPVR (183 aa). Residues 73–80, 145–147, and 158–160 each bind substrate; these read RGGEYTYH, AIG, and GIA. Cys176 functions as the Acyl-thioester intermediate in the catalytic mechanism.

The protein belongs to the LipB family.

Its subcellular location is the cytoplasm. It carries out the reaction octanoyl-[ACP] + L-lysyl-[protein] = N(6)-octanoyl-L-lysyl-[protein] + holo-[ACP] + H(+). It functions in the pathway protein modification; protein lipoylation via endogenous pathway; protein N(6)-(lipoyl)lysine from octanoyl-[acyl-carrier-protein]: step 1/2. Catalyzes the transfer of endogenously produced octanoic acid from octanoyl-acyl-carrier-protein onto the lipoyl domains of lipoate-dependent enzymes. Lipoyl-ACP can also act as a substrate although octanoyl-ACP is likely to be the physiological substrate. The polypeptide is Octanoyltransferase (Maricaulis maris (strain MCS10) (Caulobacter maris)).